Here is a 158-residue protein sequence, read N- to C-terminus: Transcription elongation factor GreA (158 aa).

Residues 4-70 are a coiled coil; it reads QKQYPMTQEG…IEQDIQRIEH (67 aa).

This sequence belongs to the GreA/GreB family.

Necessary for efficient RNA polymerase transcription elongation past template-encoded arresting sites. The arresting sites in DNA have the property of trapping a certain fraction of elongating RNA polymerases that pass through, resulting in locked ternary complexes. Cleavage of the nascent transcript by cleavage factors such as GreA or GreB allows the resumption of elongation from the new 3'terminus. GreA releases sequences of 2 to 3 nucleotides. The polypeptide is Transcription elongation factor GreA (Staphylococcus aureus (strain Mu3 / ATCC 700698)).